The sequence spans 350 residues: tRNA uridine(34) hydroxylase (350 aa).

The region spanning 146-240 (DDPDAIFIDM…YARRAREQGL (95 aa)) is the Rhodanese domain. Cys-200 acts as the Cysteine persulfide intermediate in catalysis. The interval 318–350 (QRRRRAGREKGNKIFNKSRGRLNSKLGIPDPTE) is disordered.

It belongs to the TrhO family.

The catalysed reaction is uridine(34) in tRNA + AH2 + O2 = 5-hydroxyuridine(34) in tRNA + A + H2O. Its function is as follows. Catalyzes oxygen-dependent 5-hydroxyuridine (ho5U) modification at position 34 in tRNAs. This Salmonella arizonae (strain ATCC BAA-731 / CDC346-86 / RSK2980) protein is tRNA uridine(34) hydroxylase.